The chain runs to 69 residues: Conotoxin reg3f (69 aa).

The first 20 residues, 1–20 (MMSKLGVLLTICLLLFPLSA), serve as a signal peptide directing secretion. The propeptide occupies 21-52 (LPLDGDQPADQPAERMQDISPEQNPLFHPDKR). 3 disulfides stabilise this stretch: Cys-54-Cys-68, Cys-55-Cys-66, and Cys-60-Cys-69. Cys-69 carries the post-translational modification Cysteine amide.

As to expression, expressed by the venom duct.

The protein resides in the secreted. This is Conotoxin reg3f from Conus regius (Crown cone).